A 156-amino-acid chain; its full sequence is UPF0460 protein in nifX 3'region (156 aa).

It belongs to the UPF0460 family.

The polypeptide is UPF0460 protein in nifX 3'region (Rhodobacter capsulatus (Rhodopseudomonas capsulata)).